A 990-amino-acid chain; its full sequence is Bifunctional glutamine synthetase adenylyltransferase/adenylyl-removing enzyme (990 aa).

The interval 1 to 474 (MPTDNENSMT…HFNELVEESQ (474 aa)) is adenylyl removase. The segment at 484–990 (FIACQDAWRL…WDTLFGTCSE (507 aa)) is adenylyl transferase.

Belongs to the GlnE family. Mg(2+) is required as a cofactor.

It catalyses the reaction [glutamine synthetase]-O(4)-(5'-adenylyl)-L-tyrosine + phosphate = [glutamine synthetase]-L-tyrosine + ADP. The catalysed reaction is [glutamine synthetase]-L-tyrosine + ATP = [glutamine synthetase]-O(4)-(5'-adenylyl)-L-tyrosine + diphosphate. Its function is as follows. Involved in the regulation of glutamine synthetase GlnA, a key enzyme in the process to assimilate ammonia. When cellular nitrogen levels are high, the C-terminal adenylyl transferase (AT) inactivates GlnA by covalent transfer of an adenylyl group from ATP to specific tyrosine residue of GlnA, thus reducing its activity. Conversely, when nitrogen levels are low, the N-terminal adenylyl removase (AR) activates GlnA by removing the adenylyl group by phosphorolysis, increasing its activity. The regulatory region of GlnE binds the signal transduction protein PII (GlnB) which indicates the nitrogen status of the cell. The protein is Bifunctional glutamine synthetase adenylyltransferase/adenylyl-removing enzyme of Alteromonas mediterranea (strain DSM 17117 / CIP 110805 / LMG 28347 / Deep ecotype).